We begin with the raw amino-acid sequence, 103 residues long: Fe-S cluster assembly protein DRE2 (103 aa).

The disordered stretch occupies residues 19–103 (KQDPRHRIPM…EGDEINFDEL (85 aa)). The [2Fe-2S] cluster site is built by cysteine 42, cysteine 50, cysteine 53, and cysteine 55. Positions 42-55 (CRENKARKCSNCTC) are fe-S binding site A. 4 residues coordinate [4Fe-4S] cluster: cysteine 70, cysteine 73, cysteine 81, and cysteine 84. Short sequence motifs (cx2C motif) lie at residues 70–73 (CGSC) and 81–84 (CSSC). The segment at 70-84 (CGSCHLGDPFRCSSC) is fe-S binding site B.

The protein belongs to the anamorsin family. As to quaternary structure, monomer. Interacts with TAH18. Interacts with MIA40. Requires [4Fe-4S] cluster as cofactor.

The protein localises to the cytoplasm. It is found in the mitochondrion intermembrane space. Its function is as follows. Component of the cytosolic iron-sulfur (Fe-S) protein assembly (CIA) machinery required for the maturation of extramitochondrial Fe-S proteins. Part of an electron transfer chain functioning in an early step of cytosolic Fe-S biogenesis, facilitating the de novo assembly of a [4Fe-4S] cluster on the scaffold complex CFD1-NBP35. Electrons are transferred to DRE2 from NADPH via the FAD- and FMN-containing protein TAH18. TAH18-DRE2 are also required for the assembly of the diferric tyrosyl radical cofactor of ribonucleotide reductase (RNR), probably by providing electrons for reduction during radical cofactor maturation in the catalytic small subunit RNR2. This chain is Fe-S cluster assembly protein DRE2 (DRE2), found in Enterocytozoon bieneusi (strain H348) (Microsporidian parasite).